A 513-amino-acid chain; its full sequence is uncharacterized protein (513 aa).

Residues 1 to 16 show a composition bias toward basic and acidic residues; it reads MPREHDSKYHRERDMR. Residues 1-21 are disordered; sequence MPREHDSKYHRERDMRSGLQE.

This is an uncharacterized protein from Sinorhizobium fredii (strain NBRC 101917 / NGR234).